The sequence spans 120 residues: NAD(P)H-quinone oxidoreductase subunit 3, chloroplastic (120 aa).

The next 3 helical transmembrane spans lie at 9-29 (IFWAFLLISSVIPILAFLLSG), 64-84 (MFALVFVVFDVETVFLYPWAM), and 88-108 (VLGVSVFIEALIFVLILIVGL).

It belongs to the complex I subunit 3 family. In terms of assembly, NDH is composed of at least 16 different subunits, 5 of which are encoded in the nucleus.

Its subcellular location is the plastid. It localises to the chloroplast thylakoid membrane. It carries out the reaction a plastoquinone + NADH + (n+1) H(+)(in) = a plastoquinol + NAD(+) + n H(+)(out). The catalysed reaction is a plastoquinone + NADPH + (n+1) H(+)(in) = a plastoquinol + NADP(+) + n H(+)(out). Functionally, NDH shuttles electrons from NAD(P)H:plastoquinone, via FMN and iron-sulfur (Fe-S) centers, to quinones in the photosynthetic chain and possibly in a chloroplast respiratory chain. The immediate electron acceptor for the enzyme in this species is believed to be plastoquinone. Couples the redox reaction to proton translocation, and thus conserves the redox energy in a proton gradient. The polypeptide is NAD(P)H-quinone oxidoreductase subunit 3, chloroplastic (Fagopyrum esculentum subsp. ancestrale (Wild buckwheat)).